Reading from the N-terminus, the 346-residue chain is Small ribosomal subunit biogenesis GTPase RsgA 1 (346 aa).

The region spanning 93-248 is the CP-type G domain; the sequence is AEQLIAANFD…VIDTPGMREF (156 aa). Residues 138 to 141 and 190 to 198 contribute to the GTP site; these read TKAD and GSSGVGKSS. Zn(2+) is bound by residues Cys271, Cys276, His278, and Cys284.

This sequence belongs to the TRAFAC class YlqF/YawG GTPase family. RsgA subfamily. In terms of assembly, monomer. Associates with 30S ribosomal subunit, binds 16S rRNA. The cofactor is Zn(2+).

The protein localises to the cytoplasm. Functionally, one of several proteins that assist in the late maturation steps of the functional core of the 30S ribosomal subunit. Helps release RbfA from mature subunits. May play a role in the assembly of ribosomal proteins into the subunit. Circularly permuted GTPase that catalyzes slow GTP hydrolysis, GTPase activity is stimulated by the 30S ribosomal subunit. In Listeria monocytogenes serovar 1/2a (strain ATCC BAA-679 / EGD-e), this protein is Small ribosomal subunit biogenesis GTPase RsgA 1.